The chain runs to 431 residues: Enolase (431 aa).

2 residues coordinate substrate: H157 and E166. The active-site Proton donor is E209. The Mg(2+) site is built by D244, E293, and D318. The substrate site is built by E293 and D318. K343 functions as the Proton acceptor in the catalytic mechanism. Residues 370–373 (SHRS) and K394 each bind substrate.

The protein belongs to the enolase family. As to quaternary structure, homodimer. Requires Mg(2+) as cofactor.

The protein localises to the cytoplasm. The catalysed reaction is (2R)-2-phosphoglycerate = phosphoenolpyruvate + H2O. It functions in the pathway carbohydrate degradation; glycolysis; pyruvate from D-glyceraldehyde 3-phosphate: step 4/5. The polypeptide is Enolase (ENO) (Fasciola hepatica (Liver fluke)).